A 259-amino-acid chain; its full sequence is Small ribosomal subunit protein uS2 (259 aa).

It belongs to the universal ribosomal protein uS2 family.

The protein is Small ribosomal subunit protein uS2 of Streptococcus pneumoniae (strain Hungary19A-6).